Reading from the N-terminus, the 273-residue chain is 4-hydroxy-tetrahydrodipicolinate reductase (273 aa).

12–17 contacts NAD(+); sequence GAMGRM. Position 39 (lysine 39) interacts with NADP(+). NAD(+)-binding positions include 102–104 and 126–129; these read GTT and ASNF. Residue histidine 159 is the Proton donor/acceptor of the active site. Histidine 160 contributes to the (S)-2,3,4,5-tetrahydrodipicolinate binding site. Residue lysine 163 is the Proton donor of the active site. 169-170 is a binding site for (S)-2,3,4,5-tetrahydrodipicolinate; the sequence is GT.

This sequence belongs to the DapB family. As to quaternary structure, homotetramer.

Its subcellular location is the cytoplasm. It carries out the reaction (S)-2,3,4,5-tetrahydrodipicolinate + NAD(+) + H2O = (2S,4S)-4-hydroxy-2,3,4,5-tetrahydrodipicolinate + NADH + H(+). The catalysed reaction is (S)-2,3,4,5-tetrahydrodipicolinate + NADP(+) + H2O = (2S,4S)-4-hydroxy-2,3,4,5-tetrahydrodipicolinate + NADPH + H(+). It participates in amino-acid biosynthesis; L-lysine biosynthesis via DAP pathway; (S)-tetrahydrodipicolinate from L-aspartate: step 4/4. Functionally, catalyzes the conversion of 4-hydroxy-tetrahydrodipicolinate (HTPA) to tetrahydrodipicolinate. In Buchnera aphidicola subsp. Schizaphis graminum (strain Sg), this protein is 4-hydroxy-tetrahydrodipicolinate reductase.